The chain runs to 66 residues: KEGYPVDWGNCKYECMSDAYCKDLCADRKAKSGYCYKLNWSCYCEGLPDDSPIKTNGHCRPGGRRK.

An LCN-type CS-alpha/beta domain is found at 1–60 (KEGYPVDWGNCKYECMSDAYCKDLCADRKAKSGYCYKLNWSCYCEGLPDDSPIKTNGHCR). 4 disulfides stabilise this stretch: cysteine 11/cysteine 59, cysteine 15/cysteine 35, cysteine 21/cysteine 42, and cysteine 25/cysteine 44.

This sequence belongs to the long (4 C-C) scorpion toxin superfamily. Sodium channel inhibitor family. Alpha subfamily. As to expression, expressed by the venom gland.

The protein localises to the secreted. Its function is as follows. Alpha toxins bind voltage-independently at site-3 of sodium channels (Nav) and inhibit the inactivation of the activated channels, thereby blocking neuronal transmission. In Rhopalurus junceus (Caribbean blue scorpion), this protein is Putative alpha-neurotoxin RjAa44.